Here is a 2208-residue protein sequence, read N- to C-terminus: RNA-directed RNA polymerase L (2208 aa).

Positions 26-284 (KDALLSQVHP…LHQDSDTINC (259 aa)) are endonuclease. Positions 51, 89, and 102 each coordinate Mn(2+). K115 is an active-site residue. The region spanning 1171–1367 (CDMKMAVNNG…YLSSKLNKFV (197 aa)) is the RdRp catalytic domain. A Mg(2+)-binding site is contributed by D1329.

The protein belongs to the Bunyavirales RNA polymerase family. Homomultimer; the oligomeric structure is essential for the polymerase activity. Interacts with nucleoprotein N. Interacts with protein Z; this interaction inhibits viral transcription and replication, Z partially blocks the product exit tunnel for the releasing nascent RNA product. Requires Mn(2+) as cofactor. It depends on Mg(2+) as a cofactor.

Its subcellular location is the virion. The protein resides in the host cytoplasm. The enzyme catalyses RNA(n) + a ribonucleoside 5'-triphosphate = RNA(n+1) + diphosphate. Functionally, RNA-dependent RNA polymerase, which is responsible for the replication and transcription of the viral RNA genome using antigenomic RNA as an intermediate. During transcription, synthesizes subgenomic RNAs and assures their capping by a cap-snatching mechanism, which involves the endonuclease activity cleaving the host capped pre-mRNAs. These short capped RNAs are then used as primers for viral transcription. The 3'-end of subgenomic mRNAs molecules are heterogeneous and not polyadenylated. The replicase function is to direct synthesis of antigenomic and genomic RNA which are encapsidated and non capped. As a consequence of the use of the same enzyme for both transcription and replication, these mechanisms need to be well coordinated. These processes may be regulated by proteins N and Z in a dose-dependent manner. Z protein inhibits the viral polymerase L und thus the viral transcription and RNA synthesis. The polypeptide is RNA-directed RNA polymerase L (Homo sapiens (Human)).